An 83-amino-acid polypeptide reads, in one-letter code: Conotoxin Pu6.1 (83 aa).

The first 19 residues, 1-19, serve as a signal peptide directing secretion; sequence MKLVLAIVLILMLVSLSTG. Residues 20–42 constitute a propeptide that is removed on maturation; the sequence is AEESGQEISMVGPPLYIWDPIPP. 3 cysteine pairs are disulfide-bonded: Cys-43–Cys-57, Cys-50–Cys-62, and Cys-56–Cys-78.

Belongs to the conotoxin I3 superfamily. Expressed by the venom duct.

Its subcellular location is the secreted. This Conus pulicarius (Flea-bitten cone) protein is Conotoxin Pu6.1.